The following is a 99-amino-acid chain: Beta-2-microglobulin (99 aa).

Positions 5-92 (PNVQVYSRHP…KHVTLKEPMT (88 aa)) constitute an Ig-like C1-type domain. C25 and C80 are oxidised to a cystine.

Belongs to the beta-2-microglobulin family. As to quaternary structure, heterodimer of an alpha chain and a beta chain. Beta-2-microglobulin is the beta-chain of major histocompatibility complex class I molecules.

The protein resides in the secreted. Its function is as follows. Component of the class I major histocompatibility complex (MHC). Involved in the presentation of peptide antigens to the immune system. This chain is Beta-2-microglobulin (B2M), found in Oryctolagus cuniculus (Rabbit).